The following is a 1012-amino-acid chain: Structural polyprotein (1012 aa).

Position 30 (Asp30) interacts with a divalent metal cation. Residues 513–755 (ADKGYEVVAN…AGRQYHLAMA (243 aa)) enclose the Peptidase S50 domain. The active-site Nucleophile is the Ser652. The active site involves Lys692. Residues 970-1012 (MEMKHRNPRRAPPKPKPKPNAPSQRPPGRLGRWIRTVSDEDLE) are disordered. A compositionally biased stretch (basic residues) spans 975 to 986 (RNPRRAPPKPKP). The interaction with VP1 protein stretch occupies residues 1003–1012 (IRTVSDEDLE).

As to quaternary structure, homotrimer. A central divalent metal stabilizes the VP2 trimer. Interacts with host ITGA4/ITGB1. In terms of assembly, homodimer. Interacts (via C-terminus) with VP1 in the cytoplasm. Interacts with VP2. Post-translationally, specific enzymatic cleavages yield mature proteins. The capsid assembly seems to be regulated by polyprotein processing. The protease VP4 cleaves itself off the polyprotein, thus releasing pre-VP2 and VP3 within the infected cell. During capsid assembly, the C-terminus of pre-VP2 is further processed by VP4, giving rise to VP2, the external capsid protein and three small peptides that all stay closely associated with the capsid.

The protein resides in the virion. The protein localises to the host cytoplasm. Capsid protein VP2 self assembles to form an icosahedral capsid with a T=13 symmetry, about 70 nm in diameter, and consisting of 260 VP2 trimers. The capsid encapsulates the genomic dsRNA. VP2 is also involved in attachment and entry into the host cell by interacting with host ITGA4/ITGB1. Functionally, the precursor of VP2 plays an important role in capsid assembly. First, pre-VP2 and VP2 oligomers assemble to form a procapsid. Then, the pre-VP2 intermediates may be processed into VP2 proteins by proteolytic cleavage mediated by VP4 to obtain the mature virion. The final capsid is composed of pentamers and hexamers but VP2 has a natural tendency to assemble into all-pentameric structures. Therefore pre-VP2 may be required to allow formation of the hexameric structures. Its function is as follows. Protease VP4 is a serine protease that cleaves the polyprotein into its final products. Pre-VP2 is first partially cleaved, and may be completely processed by VP4 upon capsid maturation. In terms of biological role, capsid protein VP3 plays a key role in virion assembly by providing a scaffold for the capsid made of VP2. May self-assemble to form a T=4-like icosahedral inner-capsid composed of at least 180 trimers. Plays a role in genomic RNA packaging by recruiting VP1 into the capsid and interacting with the dsRNA genome segments to form a ribonucleoprotein complex. Additionally, the interaction of the VP3 C-terminal tail with VP1 removes the inherent structural blockade of the polymerase active site. Thus, VP3 can also function as a transcriptional activator. Structural peptide 1 is a small peptide derived from pre-VP2 C-terminus. It destabilizes and perforates cell membranes, suggesting a role during entry. Functionally, structural peptide 2 is a small peptide derived from pVP2 C-terminus. It is not essential for the virus viability, but viral growth is affected when missing. Its function is as follows. Structural peptide 3 is a small peptide derived from pVP2 C-terminus. It is not essential for the virus viability, but viral growth is affected when missing. In terms of biological role, structural peptide 4 is a small peptide derived from pVP2 C-terminus. It is essential for the virus viability. The chain is Structural polyprotein from Avian infectious bursal disease virus (strain Australian 002-73) (IBDV).